Reading from the N-terminus, the 316-residue chain is 4-diphosphocytidyl-2-C-methyl-D-erythritol kinase (316 aa).

Residue Lys32 is part of the active site. 126–136 contacts ATP; the sequence is PVGAGLGGGSA. Asp168 is an active-site residue.

Belongs to the GHMP kinase family. IspE subfamily.

The catalysed reaction is 4-CDP-2-C-methyl-D-erythritol + ATP = 4-CDP-2-C-methyl-D-erythritol 2-phosphate + ADP + H(+). It participates in isoprenoid biosynthesis; isopentenyl diphosphate biosynthesis via DXP pathway; isopentenyl diphosphate from 1-deoxy-D-xylulose 5-phosphate: step 3/6. Its function is as follows. Catalyzes the phosphorylation of the position 2 hydroxy group of 4-diphosphocytidyl-2C-methyl-D-erythritol. The protein is 4-diphosphocytidyl-2-C-methyl-D-erythritol kinase of Bifidobacterium longum subsp. infantis (strain ATCC 15697 / DSM 20088 / JCM 1222 / NCTC 11817 / S12).